A 147-amino-acid chain; its full sequence is Large ribosomal subunit protein uL13 (147 aa).

The protein belongs to the universal ribosomal protein uL13 family. As to quaternary structure, part of the 50S ribosomal subunit.

Its function is as follows. This protein is one of the early assembly proteins of the 50S ribosomal subunit, although it is not seen to bind rRNA by itself. It is important during the early stages of 50S assembly. This Polaromonas naphthalenivorans (strain CJ2) protein is Large ribosomal subunit protein uL13.